The sequence spans 122 residues: Large ribosomal subunit protein bL12 (122 aa).

It belongs to the bacterial ribosomal protein bL12 family. In terms of assembly, homodimer. Part of the ribosomal stalk of the 50S ribosomal subunit. Forms a multimeric L10(L12)X complex, where L10 forms an elongated spine to which 2 to 4 L12 dimers bind in a sequential fashion. Binds GTP-bound translation factors.

In terms of biological role, forms part of the ribosomal stalk which helps the ribosome interact with GTP-bound translation factors. Is thus essential for accurate translation. In Borrelia hermsii (strain HS1 / DAH), this protein is Large ribosomal subunit protein bL12.